Here is a 91-residue protein sequence, read N- to C-terminus: Succinate dehydrogenase assembly factor 1A, mitochondrial (91 aa).

This sequence belongs to the complex I LYR family. SDHAF1 subfamily. In terms of assembly, interacts with the iron-sulfur protein subunit within the SDH catalytic dimer.

Its subcellular location is the mitochondrion matrix. In terms of biological role, plays an essential role in the assembly of succinate dehydrogenase (SDH), an enzyme complex (also referred to as respiratory complex II) that is a component of both the tricarboxylic acid (TCA) cycle and the mitochondrial electron transport chain, and which couples the oxidation of succinate to fumarate with the reduction of ubiquinone (coenzyme Q) to ubiquinol. Promotes maturation of the iron-sulfur protein subunit of the SDH catalytic dimer, protecting it from the deleterious effects of oxidants. May act together with SDHAF3. In Dictyostelium discoideum (Social amoeba), this protein is Succinate dehydrogenase assembly factor 1A, mitochondrial.